Here is a 215-residue protein sequence, read N- to C-terminus: UPF0502 protein PP_2442 (215 aa).

The protein belongs to the UPF0502 family.

This chain is UPF0502 protein PP_2442, found in Pseudomonas putida (strain ATCC 47054 / DSM 6125 / CFBP 8728 / NCIMB 11950 / KT2440).